We begin with the raw amino-acid sequence, 340 residues long: Centromere protein N (340 aa).

2 positions are modified to phosphoserine: Ser227 and Ser236.

It belongs to the CENP-N/CHL4 family. In terms of assembly, component of the CENPA-NAC complex, at least composed of CENPA, CENPC, CENPH, CENPM, CENPN, CENPT and CENPU. The CENPA-NAC complex interacts with the CENPA-CAD complex, composed of CENPI, CENPK, CENPL, CENPO, CENPP, CENPQ, CENPR and CENPS. Interacts directly with CENPA. Identified in a centromere complex containing histones H2A, H2B and H4, and at least CENPA, CENPB, CENPC, CENPT, CENPN, HJURP, SUPT16H, SSRP1 and RSF1.

Its subcellular location is the nucleus. The protein localises to the chromosome. The protein resides in the centromere. It localises to the kinetochore. Its function is as follows. Component of the CENPA-NAC (nucleosome-associated) complex, a complex that plays a central role in assembly of kinetochore proteins, mitotic progression and chromosome segregation. The CENPA-NAC complex recruits the CENPA-CAD (nucleosome distal) complex and may be involved in incorporation of newly synthesized CENPA into centromeres. CENPN is the first protein to bind specifically to CENPA nucleosomes and the direct binding of CENPA nucleosomes by CENPN is required for centromere assembly. Required for chromosome congression and efficiently align the chromosomes on a metaphase plate. The polypeptide is Centromere protein N (Cenpn) (Rattus norvegicus (Rat)).